The following is a 732-amino-acid chain: MSEQSKCPVTGRTAGNPVAGGSMLNRDWWPNQLHLDMLHQHSSLVNPMGDEFRYKEEFRKLDLGAVKKDLYALMTDSQEWWPADYGHYGGLFIRMAWHSAGTYRTSDGRGGGGRGNQRFAPLNSWPDNANLDKARRLLWPIKQKYGKMLSWADLMILAGNCALESMGFKTFGFGGGRVDIWEPEEDIYWGKEVEWLGNNRYSGERDLENPLAAVQMGLIYVNPEGPDGNPDPVAAGRDIRETFARMAMNDEETVALVAGGHTFGKCHGVGDPNLIGPEPEAAGIEEQGLGWKSGYGSGKGDETMTSGLEGAWTPDPIHWDMGYLGMLFKYEWELTKSPAGAWQWKPKDVAEEDLAPAAHDPSKRVPTMMTTADLAMRMDPVYGPISRRYYEHPDQFADAFARAWFKLTHRDMGPKSRYLGAEVPAEDLIWQDPVPAVDHELIGEGEIAELKKRLLASGLPIPELVSTTWASASTFRGSDKRGGANGSRIRLAPQKDWEVNQPEQLQRVLEKLEEIRHAFNGEQSGGKRVSLADLIVLGGCAAVEEAARRAGNDVTIPFAPGRTDASQAETDVESFAVLEPLADGFRNYARQKYSVTPEEMLVDRSQLLTLTATEMTVLLGGLRVLGANFRQSPHGVFTKRHETLTNDFFVNLLDMGTEWKPVSKEHDTFEGRDRKTGEPRWSATRVDLIFGSNARLRAIAEVYGSDDAQEKFVQDFVAAWNKVMNLDRFEIS.

Positions 97-220 (WHSAGTYRTS…LAAVQMGLIY (124 aa)) form a cross-link, tryptophyl-tyrosyl-methioninium (Trp-Tyr) (with M-246). Histidine 98 serves as the catalytic Proton acceptor. The segment at residues 220–246 (YVNPEGPDGNPDPVAAGRDIRETFARM) is a cross-link (tryptophyl-tyrosyl-methioninium (Tyr-Met) (with W-97)). Histidine 261 is a heme b binding site.

The protein belongs to the peroxidase family. Peroxidase/catalase subfamily. In terms of assembly, homodimer or homotetramer. Heme b serves as cofactor. Formation of the three residue Trp-Tyr-Met cross-link is important for the catalase, but not the peroxidase activity of the enzyme.

It carries out the reaction H2O2 + AH2 = A + 2 H2O. The catalysed reaction is 2 H2O2 = O2 + 2 H2O. Functionally, bifunctional enzyme with both catalase and broad-spectrum peroxidase activity. The protein is Catalase-peroxidase of Chlorobium phaeobacteroides (strain DSM 266 / SMG 266 / 2430).